A 269-amino-acid chain; its full sequence is Tryptophan synthase alpha chain (269 aa).

Residues Glu49 and Asp60 each act as proton acceptor in the active site.

This sequence belongs to the TrpA family. As to quaternary structure, tetramer of two alpha and two beta chains.

The catalysed reaction is (1S,2R)-1-C-(indol-3-yl)glycerol 3-phosphate + L-serine = D-glyceraldehyde 3-phosphate + L-tryptophan + H2O. It participates in amino-acid biosynthesis; L-tryptophan biosynthesis; L-tryptophan from chorismate: step 5/5. The alpha subunit is responsible for the aldol cleavage of indoleglycerol phosphate to indole and glyceraldehyde 3-phosphate. The polypeptide is Tryptophan synthase alpha chain (Paramagnetospirillum magneticum (strain ATCC 700264 / AMB-1) (Magnetospirillum magneticum)).